The chain runs to 299 residues: Acetylglutamate kinase (299 aa).

Residues Gly-72–Gly-73, Arg-94, and Asn-196 each bind substrate.

This sequence belongs to the acetylglutamate kinase family. ArgB subfamily.

It is found in the cytoplasm. It carries out the reaction N-acetyl-L-glutamate + ATP = N-acetyl-L-glutamyl 5-phosphate + ADP. It participates in amino-acid biosynthesis; L-arginine biosynthesis; N(2)-acetyl-L-ornithine from L-glutamate: step 2/4. Catalyzes the ATP-dependent phosphorylation of N-acetyl-L-glutamate. This chain is Acetylglutamate kinase, found in Burkholderia mallei (strain NCTC 10247).